The chain runs to 536 residues: Zinc finger CCCH domain-containing protein 18 (536 aa).

The C3H1-type zinc finger occupies E156–I183. Residues S211–E294 enclose the HTH OST-type domain. The region spanning R317–E392 is the RRM domain.

Its function is as follows. Possesses ribonuclease activity in vitro. The protein is Zinc finger CCCH domain-containing protein 18 of Arabidopsis thaliana (Mouse-ear cress).